The chain runs to 563 residues: Phosphomethylpyrimidine synthase (563 aa).

Substrate contacts are provided by residues asparagine 180, methionine 209, tyrosine 238, histidine 274, 294-296 (SRG), 335-338 (DGLR), and glutamate 374. Position 378 (histidine 378) interacts with Zn(2+). Tyrosine 401 contributes to the substrate binding site. Residue histidine 442 coordinates Zn(2+). Residues cysteine 522, cysteine 525, and cysteine 530 each contribute to the [4Fe-4S] cluster site.

The protein belongs to the ThiC family. [4Fe-4S] cluster is required as a cofactor.

The enzyme catalyses 5-amino-1-(5-phospho-beta-D-ribosyl)imidazole + S-adenosyl-L-methionine = 4-amino-2-methyl-5-(phosphooxymethyl)pyrimidine + CO + 5'-deoxyadenosine + formate + L-methionine + 3 H(+). The protein operates within cofactor biosynthesis; thiamine diphosphate biosynthesis. In terms of biological role, catalyzes the synthesis of the hydroxymethylpyrimidine phosphate (HMP-P) moiety of thiamine from aminoimidazole ribotide (AIR) in a radical S-adenosyl-L-methionine (SAM)-dependent reaction. This chain is Phosphomethylpyrimidine synthase, found in Geobacillus thermodenitrificans (strain NG80-2).